We begin with the raw amino-acid sequence, 200 residues long: LHFPL tetraspan subfamily member 6 protein (200 aa).

Positions 1–21 (MASSLTCAGVIWALLSFLCAA) are cleaved as a signal peptide. A run of 2 helical transmembrane segments spans residues 84–104 (ICTV…LTAI) and 123–143 (GIQF…PLGW). N-linked (GlcNAc...) asparagine glycosylation occurs at Asn-154. A helical transmembrane segment spans residues 172-192 (CTGAGAAAAMVLCTWMACFAG).

It belongs to the LHFP family.

It localises to the membrane. The polypeptide is LHFPL tetraspan subfamily member 6 protein (Danio rerio (Zebrafish)).